The sequence spans 147 residues: Myosin-2 essential light chain (147 aa).

EF-hand domains are found at residues 7–42 (DQLA…LGQN), 80–115 (DTAD…LGEK), and 115–147 (KLTD…VMSG). Serine 30 is subject to Phosphoserine. Ca(2+)-binding residues include aspartate 93, aspartate 95, serine 97, tyrosine 99, and glutamate 104.

As to quaternary structure, myosin is a hexamer of 2 heavy chains and 4 light chains.

This chain is Myosin-2 essential light chain (Mlc-c), found in Drosophila melanogaster (Fruit fly).